We begin with the raw amino-acid sequence, 132 residues long: MQATDVIADMLTRIRNACSAKHETVDIPASNIKRAIANILLEEGYIKGIEEIDDGKQGVLRLKLKYTANKQNVISGLKRISKPGLRVYAGKSEIPKVLGGLGIAIISTSKGIMTDKKARAEGVGGEVLAFVW.

It belongs to the universal ribosomal protein uS8 family. Part of the 30S ribosomal subunit. Contacts proteins S5 and S12.

Its function is as follows. One of the primary rRNA binding proteins, it binds directly to 16S rRNA central domain where it helps coordinate assembly of the platform of the 30S subunit. The polypeptide is Small ribosomal subunit protein uS8 (Acetivibrio thermocellus (strain ATCC 27405 / DSM 1237 / JCM 9322 / NBRC 103400 / NCIMB 10682 / NRRL B-4536 / VPI 7372) (Clostridium thermocellum)).